A 183-amino-acid polypeptide reads, in one-letter code: Bifunctional protein PyrR (183 aa).

Substrate contacts are provided by residues 42-43 (TR), Arg87, 104-112 (DDVLYTGRT), Arg137, and Val161. The PRPP-binding motif lies at 100–112 (VILVDDVLYTGRT).

It belongs to the purine/pyrimidine phosphoribosyltransferase family. PyrR subfamily.

It catalyses the reaction UMP + diphosphate = 5-phospho-alpha-D-ribose 1-diphosphate + uracil. In terms of biological role, regulates the transcription of the pyrimidine nucleotide (pyr) operon in response to exogenous pyrimidines. Functionally, also displays a weak uracil phosphoribosyltransferase activity which is not physiologically significant. The protein is Bifunctional protein PyrR of Deinococcus radiodurans (strain ATCC 13939 / DSM 20539 / JCM 16871 / CCUG 27074 / LMG 4051 / NBRC 15346 / NCIMB 9279 / VKM B-1422 / R1).